Consider the following 439-residue polypeptide: MVPSSPRALFLLLLILACPEPRASQNCLSKQQLLSAIRQLQQLLKGQETRFAEGIRHMKSRLAALQNSVGRVGPDALPVSCPALNTPADGRKFGSKYLVDHEVHFTCNPGFRLVGPSSVVCLPNGTWTGEQPHCRGISECSSQPCQNGGTCVEGVNQYRCICPPGRTGNRCQHQAQTAAPEGSVAGDSAFSRAPRCAQVERAQHCSCEAGFHLSGAAGDSVCQDVNECELYGQEGRPRLCMHACVNTPGSYRCTCPGGYRTLADGKSCEDVDECVGLQPVCPQGTTCINTGGSFQCVSPECPEGSGNVSYVKTSPFQCERNPCPMDSRPCRHLPKTISFHYLSLPSNLKTPITLFRMATASAPGRAGPNSLRFGIVGGNSRGHFVMQRSDRQTGDLILVQNLEGPQTLEVDVDMSEYLDRSFQANHVSKVTIFVSPYDF.

Positions 1 to 24 (MVPSSPRALFLLLLILACPEPRAS) are cleaved as a signal peptide. Residues 28–53 (LSKQQLLSAIRQLQQLLKGQETRFAE) are a coiled coil. One can recognise a Sushi domain in the interval 79-136 (VSCPALNTPADGRKFGSKYLVDHEVHFTCNPGFRLVGPSSVVCLPNGTWTGEQPHCRG). Intrachain disulfides connect Cys81–Cys121, Cys107–Cys134, Cys140–Cys151, Cys145–Cys160, Cys162–Cys171, Cys228–Cys244, Cys240–Cys253, Cys255–Cys268, Cys274–Cys287, Cys281–Cys296, and Cys301–Cys318. N-linked (GlcNAc...) asparagine glycosylation occurs at Asn124. An EGF-like 1; calcium-binding domain is found at 136–172 (GISECSSQPCQNGGTCVEGVNQYRCICPPGRTGNRCQ). In terms of domain architecture, EGF-like 2; calcium-binding spans 224–269 (DVNECELYGQEGRPRLCMHACVNTPGSYRCTCPGGYRTLADGKSCE). The region spanning 270 to 319 (DVDECVGLQPVCPQGTTCINTGGSFQCVSPECPEGSGNVSYVKTSPFQCE) is the EGF-like 3; calcium-binding domain. N-linked (GlcNAc...) asparagine glycosylation occurs at Asn307.

This sequence belongs to the fibulin family. Interacts with heparin, FBLN1, FN1 and DSPP. Preferentially binds dental mesenchyme cells and odontoblasts but not dental epithelial cells or nondental cells. Binding requires a heparan sulfate-containing receptor on the cell surface as well as an integrin. Post-translationally, N-glycosylated.

The protein resides in the secreted. Its subcellular location is the extracellular space. The protein localises to the extracellular matrix. In terms of biological role, an adhesion molecule that interacts with extracellular matrix molecules in developing teeth and may play important roles in differentiation and maintenance of odontoblasts as well as in dentin formation. The protein is Fibulin-7 (FBLN7) of Homo sapiens (Human).